The primary structure comprises 189 residues: Thymidine kinase (189 aa).

ATP contacts are provided by residues 9 to 16 and 85 to 88; these read GTMNSGKT and DESQ. The Proton acceptor role is filled by Glu86. Positions 143, 146, 180, and 183 each coordinate Zn(2+).

Belongs to the thymidine kinase family. As to quaternary structure, homotetramer.

Its subcellular location is the cytoplasm. It carries out the reaction thymidine + ATP = dTMP + ADP + H(+). The sequence is that of Thymidine kinase from Streptococcus pyogenes serotype M1.